We begin with the raw amino-acid sequence, 194 residues long: RNA polymerase II subunit A C-terminal domain phosphatase SSU72 like protein 4 (194 aa).

The protein belongs to the SSU72 phosphatase family.

It is found in the nucleus. The catalysed reaction is O-phospho-L-seryl-[protein] + H2O = L-seryl-[protein] + phosphate. The enzyme catalyses O-phospho-L-threonyl-[protein] + H2O = L-threonyl-[protein] + phosphate. Protein phosphatase that catalyzes the dephosphorylation of the C-terminal domain of RNA polymerase II. Plays a role in RNA processing and termination. In Homo sapiens (Human), this protein is RNA polymerase II subunit A C-terminal domain phosphatase SSU72 like protein 4.